Here is a 410-residue protein sequence, read N- to C-terminus: LL-diaminopimelate aminotransferase (410 aa).

Positions 15 and 42 each coordinate substrate. Pyridoxal 5'-phosphate-binding positions include Tyr72, 108–109 (TK), Tyr132, Asn186, Tyr217, and 245–247 (SFS). The substrate site is built by Lys109, Tyr132, and Asn186. N6-(pyridoxal phosphate)lysine is present on Lys248. Residues Arg256 and Asn291 each contribute to the pyridoxal 5'-phosphate site. Substrate contacts are provided by Asn291 and Arg387.

This sequence belongs to the class-I pyridoxal-phosphate-dependent aminotransferase family. LL-diaminopimelate aminotransferase subfamily. Homodimer. The cofactor is pyridoxal 5'-phosphate.

It carries out the reaction (2S,6S)-2,6-diaminopimelate + 2-oxoglutarate = (S)-2,3,4,5-tetrahydrodipicolinate + L-glutamate + H2O + H(+). Its pathway is amino-acid biosynthesis; L-lysine biosynthesis via DAP pathway; LL-2,6-diaminopimelate from (S)-tetrahydrodipicolinate (aminotransferase route): step 1/1. Involved in the synthesis of meso-diaminopimelate (m-DAP or DL-DAP), required for both lysine and peptidoglycan biosynthesis. Catalyzes the direct conversion of tetrahydrodipicolinate to LL-diaminopimelate. This Lawsonia intracellularis (strain PHE/MN1-00) protein is LL-diaminopimelate aminotransferase.